Reading from the N-terminus, the 400-residue chain is Subtilisin-like protease 11 (400 aa).

An N-terminal signal peptide occupies residues 1–19 (MGLFKVIFTAVAALSAVDA). Residues 20-117 (AELLSSAKSK…VEHDRHVYIS (98 aa)) constitute a propeptide that is removed on maturation. In terms of domain architecture, Inhibitor I9 spans 35–116 (SYLVVMKDSV…FVEHDRHVYI (82 aa)). One can recognise a Peptidase S8 domain in the interval 127-400 (SWGLGRVSHR…NKLLYNRSGK (274 aa)). A glycan (N-linked (GlcNAc...) asparagine) is linked at asparagine 138. Aspartate 159 (charge relay system) is an active-site residue. An N-linked (GlcNAc...) asparagine glycan is attached at asparagine 181. The active-site Charge relay system is histidine 191. N-linked (GlcNAc...) asparagine glycans are attached at residues asparagine 252 and asparagine 337. The Charge relay system role is filled by serine 346. N-linked (GlcNAc...) asparagine glycans are attached at residues asparagine 388 and asparagine 396.

This sequence belongs to the peptidase S8 family.

Its subcellular location is the secreted. Functionally, secreted subtilisin-like serine protease with keratinolytic activity that contributes to pathogenicity. This Trichophyton verrucosum (strain HKI 0517) protein is Subtilisin-like protease 11 (SUB11).